A 106-amino-acid chain; its full sequence is uncharacterized protein (106 aa).

This is an uncharacterized protein from Saccharomyces cerevisiae (strain ATCC 204508 / S288c) (Baker's yeast).